We begin with the raw amino-acid sequence, 528 residues long: MPISLGNAFIKNFLGKAPDWYKVAIIAFLIINPIVFFLINPFVAGWLLVAEFIFTLAMALKCYPLQPGGLLAIEAIAIGMTSPAQVKHELVANIEVLLLLVFMVAGIYFMKQLLLFIFTKILLGIRSKTLLSLAFCFAAAFLSAFLDALTVIAVVISVAVGFYSIYHKVASGNPIGDHDHTQDDTITELTRDDLENYRAFLRSLLMHAGVGTALGGVTTMVGEPQNLIIADQAGWLFGEFLIRMSPVTLPVFICGLITCALVEKLKVFGYGAKLPDNVRQILVDFDREERKTRTNQDVAKLWVQGIIAVWLIVALALHLAAVGLIGLSVIILATSFTGVIEEHSMGKAFEEALPFTALLAVFFSIVAVIIDQELFKPVIDAVLAVEDKGTQLALFYVANGLLSMVSDNVFVGTVYINEVKSALMEGLITREQFDLLAVAINTGTNLPSVATPNGQAAFLFLLTSALAPLIRLSYGRMVVMALPYTVVLAIVGLMGIMFFLEPATASFYDAGWIAPHTGDLTPVVSGGH.

The next 11 helical transmembrane spans lie at 23–43 (VAIIAFLIINPIVFFLINPFV), 45–65 (GWLLVAEFIFTLAMALKCYPL), 90–110 (LVANIEVLLLLVFMVAGIYFM), 136–156 (CFAAAFLSAFLDALTVIAVVI), 204–224 (LLMHAGVGTALGGVTTMVGEP), 237–257 (FGEFLIRMSPVTLPVFICGLI), 305–325 (GIIAVWLIVALALHLAAVGLI), 350–370 (EEALPFTALLAVFFSIVAVII), 392–412 (LALFYVANGLLSMVSDNVFVG), 450–470 (ATPNGQAAFLFLLTSALAPLI), and 479–499 (VMALPYTVVLAIVGLMGIMFF).

The protein belongs to the NhaB Na(+)/H(+) (TC 2.A.34) antiporter family.

It localises to the cell inner membrane. The enzyme catalyses 2 Na(+)(in) + 3 H(+)(out) = 2 Na(+)(out) + 3 H(+)(in). Its function is as follows. Na(+)/H(+) antiporter that extrudes sodium in exchange for external protons. Can also transport lithium and potassium. The sequence is that of Na(+)/H(+) antiporter NhaB from Vibrio parahaemolyticus serotype O3:K6 (strain RIMD 2210633).